The chain runs to 190 residues: Potassium-transporting ATPase KdpC subunit (190 aa).

A helical transmembrane segment spans residues 10–30; the sequence is TFIFLLLITGGVYPLLTTVLG.

This sequence belongs to the KdpC family. In terms of assembly, the system is composed of three essential subunits: KdpA, KdpB and KdpC.

It localises to the cell inner membrane. Part of the high-affinity ATP-driven potassium transport (or Kdp) system, which catalyzes the hydrolysis of ATP coupled with the electrogenic transport of potassium into the cytoplasm. This subunit acts as a catalytic chaperone that increases the ATP-binding affinity of the ATP-hydrolyzing subunit KdpB by the formation of a transient KdpB/KdpC/ATP ternary complex. In Escherichia coli (strain 55989 / EAEC), this protein is Potassium-transporting ATPase KdpC subunit.